Reading from the N-terminus, the 211-residue chain is WUSCHEL-related homeobox 14 (211 aa).

Residues Ser91–Gln155 constitute a DNA-binding region (homeobox; WUS-type). Residues Arg147 to Gly183 form a disordered region.

This sequence belongs to the WUS homeobox family. In terms of tissue distribution, expressed in root vasculature, pericycle and stamen. Expressed in the procambium during stem maturation.

The protein resides in the nucleus. In terms of biological role, acts redundantly with WOX4 downstream of the TDR/PXY receptor kinase to regulate procambial cell proliferation and differentiation in vascular tissue, independently of any role in vascular. Involved in the regulation of gibberellin (GA) biosynthesis pathway. Positively regulates the expression of the GA biosynthesis gene GA3OX1, and negatively regulates the expression of GA2OX1 during secondary growth, which increases bioactive GA content in the inflorescence stem. Promotes vascular cell differentiation in the inflorescence stem. Its function is as follows. Transcription factor which may be involved in developmental processes. The polypeptide is WUSCHEL-related homeobox 14 (WOX14) (Arabidopsis thaliana (Mouse-ear cress)).